Consider the following 78-residue polypeptide: Large ribosomal subunit protein bL28 (78 aa).

A compositionally biased stretch (polar residues) spans M1–H20. Positions M1–I23 are disordered.

The protein belongs to the bacterial ribosomal protein bL28 family.

The polypeptide is Large ribosomal subunit protein bL28 (Prochlorococcus marinus (strain NATL2A)).